Here is a 483-residue protein sequence, read N- to C-terminus: Arginine/agmatine antiporter (483 aa).

12 consecutive transmembrane segments (helical) span residues 11 to 33 (ILGTLALTGIVISYMIGGGIFSL), 48 to 70 (LAWMLSGIGIFFIANTFKTLSII), 90 to 112 (VGFTIAWGYWLCQIFGNVGYAVI), 127 to 149 (GGNTIPAILLGSLLIWIFNYIVL), 156 to 178 (SFVNIIGVVCTLIPLLLFILITA), 209 to 228 (TMLVTLWAFIGIEGAVVISG), 241 to 263 (ILGFSGCLLIYVLLSLLPFGSLF), 293 to 315 (TGLLIAVLTSWLSWTILASEIPY), 335 to 357 (APSFSLFMTSGLMQITMLLVYFS), 367 to 389 (ITGVMVLPAYLTSSLFLVKFSLS), 415 to 435 (LWLIYAGGLQHLFMVAILLAL), and 458 to 477 (EILKMTIMALAALLAIFLFS).

Belongs to the amino acid-polyamine-organocation (APC) superfamily. Basic amino acid/polyamine antiporter (APA) (TC 2.A.3.2) family.

Its subcellular location is the cell inner membrane. Catalyzes the exchange of L-arginine for agmatine. The arginine uptake by the bacterium in the macrophage may be a virulence factor against the host innate immune response. This Chlamydia trachomatis serovar L2 (strain ATCC VR-902B / DSM 19102 / 434/Bu) protein is Arginine/agmatine antiporter (aaxC).